The sequence spans 34 residues: Cytochrome b6-f complex subunit 5 (34 aa).

The helical transmembrane segment at 5-25 (LLSGIVLGLVPVTLAGLFVTA) threads the bilayer.

This sequence belongs to the PetG family. The 4 large subunits of the cytochrome b6-f complex are cytochrome b6, subunit IV (17 kDa polypeptide, PetD), cytochrome f and the Rieske protein, while the 4 small subunits are PetG, PetL, PetM and PetN. The complex functions as a dimer.

The protein localises to the plastid. It localises to the chloroplast thylakoid membrane. Functionally, component of the cytochrome b6-f complex, which mediates electron transfer between photosystem II (PSII) and photosystem I (PSI), cyclic electron flow around PSI, and state transitions. PetG is required for either the stability or assembly of the cytochrome b6-f complex. This is Cytochrome b6-f complex subunit 5 from Oltmannsiellopsis viridis (Marine flagellate).